A 464-amino-acid chain; its full sequence is MGPIMPPSKKPESTGISVSSQCYRSSTLSNPLHDDDDLDFPPPAVKINKEKGGMEDEELTNLNWLHESKNLLKSFGDTVLRSVSPVQDIDDDTPPSPAQSDMPYDAKQNPNCKPPYSFSCLIFMAIEDSPTKRLPVKDIYNWILEHFPYFANAPTGWKNSVRHNLSLNKCFKKVDKDRSQSIGKGSLWCIDPEYRQNLIQALKKTPYHPYSHVFNTPPTSPQAYQSTSVPPLWPGSTFFKKNGALLQVPPGVIQNGARVLNRGIFSGVRPLPINPIGAMAASVRNGIANCRTRMESEPSCGSPLVSSDPKDDHNYSSAKSANKRSSSPSDSISSSSADDHYEFAAKVCREGSDISFQSHESFSETEEEDKKQIKKELKDSLVESGYSSQHKKKQHLLKLRRIPSDALPLKKRRTEKPPESDDEEMKEAAGSLLHLAGIRSCLNNITNRTAKGQKEQKDKETTKN.

Disordered regions lie at residues 1-53 (MGPI…EKGG) and 85-108 (PVQDIDDDTPPSPAQSDMPYDAKQ). Polar residues predominate over residues 14–30 (TGISVSSQCYRSSTLSN). The segment at residues 113 to 209 (KPPYSFSCLI…QALKKTPYHP (97 aa)) is a DNA-binding region (fork-head). 2 disordered regions span residues 294–337 (MESE…SSSA) and 381–428 (LVES…MKEA). Low complexity predominate over residues 316 to 336 (SSAKSANKRSSSPSDSISSSS). The span at 389 to 401 (QHKKKQHLLKLRR) shows a compositional bias: basic residues.

It localises to the nucleus. Acts as a transcriptional repressor. May be involved in DNA damage-inducible cell cycle arrests (checkpoints). This is Forkhead box protein N3 from Xenopus tropicalis (Western clawed frog).